A 1088-amino-acid chain; its full sequence is DNA-directed RNA polymerase subunit beta (1088 aa).

The protein belongs to the RNA polymerase beta chain family. As to quaternary structure, in plastids the minimal PEP RNA polymerase catalytic core is composed of four subunits: alpha, beta, beta', and beta''. When a (nuclear-encoded) sigma factor is associated with the core the holoenzyme is formed, which can initiate transcription.

The protein resides in the plastid. It localises to the chloroplast. The enzyme catalyses RNA(n) + a ribonucleoside 5'-triphosphate = RNA(n+1) + diphosphate. In terms of biological role, DNA-dependent RNA polymerase catalyzes the transcription of DNA into RNA using the four ribonucleoside triphosphates as substrates. This chain is DNA-directed RNA polymerase subunit beta, found in Ostreococcus tauri.